A 627-amino-acid polypeptide reads, in one-letter code: Hemocyanin B chain (627 aa).

Positions 173, 177, and 204 each coordinate Cu cation. Residues asparagine 312 and asparagine 316 are each glycosylated (N-linked (GlcNAc...) asparagine). Cu cation contacts are provided by histidine 324, histidine 328, and histidine 364. Cysteine 534 and cysteine 582 are oxidised to a cystine.

It belongs to the tyrosinase family. Hemocyanin subfamily. Tarantula hemocyanin is a 24-chain polymer with seven different chains identified. As to expression, hemolymph.

Its subcellular location is the secreted. The protein localises to the extracellular space. Functionally, hemocyanins are copper-containing oxygen carriers occurring freely dissolved in the hemolymph of many mollusks and arthropods. This is Hemocyanin B chain (HCB) from Aphonopelma sp. (American tarantula).